The following is a 184-amino-acid chain: MMKAEELNKGFVNEIIEAGTPVPGEKEVASLKSCYQCGTCTGSCPSGRRTAYRTRKVIRQALLGIDSVLDSDDIWKCTTCYTCYERCPRDVKVTEIIKTIRNLAAQKGNMAKPHKMTAVYVLKAGHAVPANDDTAKLRKSIGLAEKAPIAQFSQKDMDELRTLAKNLKFDELIGFDWKTMGLKQ.

2 4Fe-4S ferredoxin-type domains span residues 24–54 (GEKE…AYRT) and 65–97 (IDSV…TEII). 8 residues coordinate [4Fe-4S] cluster: cysteine 34, cysteine 37, cysteine 40, cysteine 44, cysteine 77, cysteine 80, cysteine 83, and cysteine 87.

Belongs to the HdrC family. As to quaternary structure, the heterodisulfide reductase is composed of three subunits; HdrA, HdrB and HdrC. B1 and B2 subunits are interchangeable, as are the C1 and C2 subunits. The heterodisulfide reductase forms a supercomplex with formylmethanofuran dehydrogenase (Fwd), F(420)-non-reducing hydrogenase (Vhu) and formate dehydrogenase (Fdh). It depends on [4Fe-4S] cluster as a cofactor.

The catalysed reaction is coenzyme B + coenzyme M + 2 reduced [2Fe-2S]-[ferredoxin] + 2 H(+) = coenzyme M-coenzyme B heterodisulfide + 2 H2 + 2 oxidized [2Fe-2S]-[ferredoxin]. The enzyme catalyses coenzyme B + coenzyme M + 2 reduced [2Fe-2S]-[ferredoxin] + 2 CO2 = coenzyme M-coenzyme B heterodisulfide + 2 formate + 2 oxidized [2Fe-2S]-[ferredoxin]. It functions in the pathway cofactor metabolism; coenzyme M-coenzyme B heterodisulfide reduction; coenzyme B and coenzyme M from coenzyme M-coenzyme B heterodisulfide: step 1/1. Functionally, part of a complex that catalyzes the reversible reduction of CoM-S-S-CoB to the thiol-coenzymes H-S-CoM (coenzyme M) and H-S-CoB (coenzyme B). This chain is H(2)/formate:CoB-CoM heterodisulfide,ferredoxin reductase subunit C2, found in Methanococcus maripaludis (strain DSM 14266 / JCM 13030 / NBRC 101832 / S2 / LL).